A 426-amino-acid chain; its full sequence is Enolase (426 aa).

Position 162 (glutamine 162) interacts with (2R)-2-phosphoglycerate. Catalysis depends on glutamate 204, which acts as the Proton donor. Mg(2+) is bound by residues aspartate 241, glutamate 288, and aspartate 315. Residues lysine 340, arginine 369, serine 370, and lysine 391 each coordinate (2R)-2-phosphoglycerate. The Proton acceptor role is filled by lysine 340.

It belongs to the enolase family. Mg(2+) is required as a cofactor.

The protein localises to the cytoplasm. The protein resides in the secreted. It localises to the cell surface. It carries out the reaction (2R)-2-phosphoglycerate = phosphoenolpyruvate + H2O. It participates in carbohydrate degradation; glycolysis; pyruvate from D-glyceraldehyde 3-phosphate: step 4/5. Catalyzes the reversible conversion of 2-phosphoglycerate (2-PG) into phosphoenolpyruvate (PEP). It is essential for the degradation of carbohydrates via glycolysis. This chain is Enolase, found in Bacteroides thetaiotaomicron (strain ATCC 29148 / DSM 2079 / JCM 5827 / CCUG 10774 / NCTC 10582 / VPI-5482 / E50).